The sequence spans 75 residues: UPF0352 protein VV1166 (75 aa).

This sequence belongs to the UPF0352 family.

In Vibrio vulnificus (strain YJ016), this protein is UPF0352 protein VV1166.